Here is a 223-residue protein sequence, read N- to C-terminus: Noggin (223 aa).

The signal sequence occupies residues 1 to 26 (MDHSQCLVTIYAAAVLLGLRLQQGSC). Residue Asn-61 is glycosylated (N-linked (GlcNAc...) asparagine). Intrachain disulfides connect Cys-146–Cys-183, Cys-169–Cys-219, Cys-175–Cys-221, and Cys-198–Cys-206.

It belongs to the noggin family. In terms of assembly, homodimer.

The protein localises to the secreted. Functionally, inhibitor of bone morphogenetic proteins (BMP) signaling. Controls somitogenesis by sequestering the BMP-4 activity which in turn differentiates distinct subtypes of the mesoderm along the mediolateral axis. The chain is Noggin (NOG) from Gallus gallus (Chicken).